Reading from the N-terminus, the 296-residue chain is Protoheme IX farnesyltransferase (296 aa).

Transmembrane regions (helical) follow at residues 9-29, 36-56, 84-104, 108-128, 133-153, 163-183, 209-229, 234-254, and 265-285; these read VTKP…FLLA, YPLF…GCVF, AVSL…LWFG, LACW…SLYM, VYGT…GYCA, LILL…IAIF, ITLY…GGYA, LVVA…GYKV, and FGFS…DFMV.

This sequence belongs to the UbiA prenyltransferase family. Protoheme IX farnesyltransferase subfamily.

The protein resides in the cell inner membrane. It carries out the reaction heme b + (2E,6E)-farnesyl diphosphate + H2O = Fe(II)-heme o + diphosphate. It functions in the pathway porphyrin-containing compound metabolism; heme O biosynthesis; heme O from protoheme: step 1/1. Its function is as follows. Converts heme B (protoheme IX) to heme O by substitution of the vinyl group on carbon 2 of heme B porphyrin ring with a hydroxyethyl farnesyl side group. In Citrobacter koseri (strain ATCC BAA-895 / CDC 4225-83 / SGSC4696), this protein is Protoheme IX farnesyltransferase.